A 797-amino-acid chain; its full sequence is MKTRGFSFPRQRQVLFLFLFWGVSLAGSGFGRYSVTEETEKGSFVVNLAKDLGLAEGELAARGTRVVSDDNKQYLLLDSHTGNLLTNEKLDREKLCGPKEPCMLYFQILMDDPFQIYRAELRVRDINDHSPVFRHKEMVLKISENTAEGTAFRLERAQDPDEGHNSIQNYTISSNSFFHIKISGSDEGMIYPELVLDKALDREEQEELSLTLTALDGGSPSRSGTSTIRIVVLDVNDNVPQFAQALYETQAPENSPVGSLIVKVSAGDADSGVNAEVSYSFFDASEDILTTFQINPFSGEIFLRELLDYELVNSYKINIQAMDGGGLSARCTVLIKVLDSNDNPPELIISSLSNSVAENSPGIVLAVFKIKDRDSGENGKTICYVQDNLPFFLKPSVDNFYILMTEGALDRESKAEYNITITVTDLGTPRLKTEHSITLQVSDVNDNAPAFTQTSYTLFVRENNSPALHIGSVSATDRDSGTNAQVTYSLLPPQDPHLPLASLVSINADNGHLFALRSLDYEALQAFDFRVGASDRGSPALSSEALVRVLVLDANDNSPFVLYPLQNGSAPCTELVPRAAEPGYLVTKVVAVDGDSGQNAWLSYQLLKATEPGLFGVWAHNGEVRTARLLSERDAAKHRLVVLVKDNGEPPRSATATLHVLLVDGFSQPYLPLPEAAPAQAQADLLTVYLVVALASVSSLFLLSVLLFVAVRLCRRSRAASVGRCSVPEGPFPGHLVDVSGTGTLFQSYQYEVCLTGGSETGEFKFLKPITPHLPPHRGGKEIEENSTLPNSFGFNY.

A signal peptide spans 1–26 (MKTRGFSFPRQRQVLFLFLFWGVSLA). Over 27-690 (GSGFGRYSVT…AQADLLTVYL (664 aa)) the chain is Extracellular. 5 Cadherin domains span residues 35–133 (VTEE…SPVF), 138–242 (MVLK…VPQF), 247–347 (YETQ…PPEL), 352–451 (LSNS…APAF), and 456–561 (YTLF…SPFV). Residue Asn169 is glycosylated (N-linked (GlcNAc...) asparagine). Residue Asn418 is glycosylated (N-linked (GlcNAc...) asparagine). Asn567 carries an N-linked (GlcNAc...) asparagine glycan. The 104-residue stretch at 568 to 671 (GSAPCTELVP…LVDGFSQPYL (104 aa)) folds into the Cadherin 6 domain. Residues 691–711 (VVALASVSSLFLLSVLLFVAV) traverse the membrane as a helical segment. The Cytoplasmic portion of the chain corresponds to 712–797 (RLCRRSRAAS…TLPNSFGFNY (86 aa)). The segment at 777 to 797 (HRGGKEIEENSTLPNSFGFNY) is disordered. Polar residues predominate over residues 786–797 (NSTLPNSFGFNY).

Its subcellular location is the cell membrane. Potential calcium-dependent cell-adhesion protein. May be involved in the establishment and maintenance of specific neuronal connections in the brain. The polypeptide is Protocadherin beta-9 (PCDHB9) (Homo sapiens (Human)).